A 40-amino-acid chain; its full sequence is U2-myrmicitoxin-Tb1a (40 aa).

Positions A1–A3 are cleaved as a signal peptide. The propeptide occupies M4–A29. Residue R39 is modified to Arginine amide.

This sequence belongs to the formicidae venom precursor-01 superfamily. In terms of tissue distribution, expressed by the venom gland.

The protein localises to the secreted. Functionally, venom protein with unknown function. Does not induce paralysis when a high dose is administered by intrathoracic injection into the blowfly Lucilia caesar. The chain is U2-myrmicitoxin-Tb1a from Tetramorium bicarinatum (Tramp ant).